The chain runs to 697 residues: Polyribonucleotide nucleotidyltransferase (697 aa).

Mg(2+) contacts are provided by D488 and D494. A KH domain is found at 555–614; the sequence is PTFEVITINPDKIRDVIGKGGATIRQITEETKAAIDIEDNGTVRVFGETKAAARAAIAKI. The S1 motif domain maps to 624-692; it reads GKIYDGKVIR…NRGRIKLSMK (69 aa).

The protein belongs to the polyribonucleotide nucleotidyltransferase family. Component of the RNA degradosome, which is a multiprotein complex involved in RNA processing and mRNA degradation. Mg(2+) serves as cofactor.

It is found in the cytoplasm. It catalyses the reaction RNA(n+1) + phosphate = RNA(n) + a ribonucleoside 5'-diphosphate. Involved in mRNA degradation. Catalyzes the phosphorolysis of single-stranded polyribonucleotides processively in the 3'- to 5'-direction. This Acinetobacter baylyi (strain ATCC 33305 / BD413 / ADP1) protein is Polyribonucleotide nucleotidyltransferase.